A 299-amino-acid polypeptide reads, in one-letter code: Bifunctional methyltransferase-like/endonuclease (299 aa).

The tract at residues 1-80 (MLSSKLLDIN…NLIVSPMQKA (80 aa)) is probable methylated-DNA--protein-cysteine methyltransferase-like. The endonuclease V stretch occupies residues 81 to 299 (LLEKEVKIIG…GRGDSNPGRD (219 aa)). The Mg(2+) site is built by Asp135 and Asn197.

In the N-terminal section; belongs to the MGMT family. The protein in the C-terminal section; belongs to the endonuclease V family. Mg(2+) serves as cofactor.

It is found in the cytoplasm. It catalyses the reaction Endonucleolytic cleavage at apurinic or apyrimidinic sites to products with a 5'-phosphate.. Its function is as follows. DNA repair enzyme involved in the repair of deaminated bases. Selectively cleaves double-stranded DNA at the second phosphodiester bond 3' to a deoxyinosine leaving behind the intact lesion on the nicked DNA. This is Bifunctional methyltransferase-like/endonuclease from Nanoarchaeum equitans (strain Kin4-M).